The chain runs to 142 residues: Hemoglobin subunit alpha-2 (142 aa).

The Globin domain maps to 2 to 142 (LLSADDKKHI…VSTVLTSKYR (141 aa)). Histidine 59 contributes to the O2 binding site. Histidine 88 lines the heme b pocket.

Belongs to the globin family. In terms of assembly, heterotetramer of two alpha chains and two beta chains. In terms of tissue distribution, red blood cells.

In terms of biological role, involved in oxygen transport from the lung to the various peripheral tissues. This is Hemoglobin subunit alpha-2 (hba2) from Xenopus laevis (African clawed frog).